Here is a 256-residue protein sequence, read N- to C-terminus: MLRIADKTFDSHLFTGTGKFASSQLMVEAIRASGSQLVTLAMKRVDLRQHNDAILDPLIAAGVTLLPNTSGAKTAEEAIFAAHLAREALGTNWLKLEIHPDARWLLPDPIETLKAAETLVQQGFVVLPYCGADPVLCKRLEEVGCAAVMPLGAPIGSNQGLETRAMLEIIIQQATVPVVVDAGIGVPSHAAQALEMGADAVLVNTAIAVADDPVNMAKAFRLAVDAGLLARQSGPGSRSHFAHATSPLTGFLEASA.

The active-site Schiff-base intermediate with DXP is Lys95. Residues Gly156, 182-183 (AG), and 204-205 (NT) contribute to the 1-deoxy-D-xylulose 5-phosphate site.

This sequence belongs to the ThiG family. In terms of assembly, homotetramer. Forms heterodimers with either ThiH or ThiS.

It localises to the cytoplasm. It carries out the reaction [ThiS sulfur-carrier protein]-C-terminal-Gly-aminoethanethioate + 2-iminoacetate + 1-deoxy-D-xylulose 5-phosphate = [ThiS sulfur-carrier protein]-C-terminal Gly-Gly + 2-[(2R,5Z)-2-carboxy-4-methylthiazol-5(2H)-ylidene]ethyl phosphate + 2 H2O + H(+). The protein operates within cofactor biosynthesis; thiamine diphosphate biosynthesis. Its function is as follows. Catalyzes the rearrangement of 1-deoxy-D-xylulose 5-phosphate (DXP) to produce the thiazole phosphate moiety of thiamine. Sulfur is provided by the thiocarboxylate moiety of the carrier protein ThiS. In vitro, sulfur can be provided by H(2)S. The polypeptide is Thiazole synthase (Escherichia fergusonii (strain ATCC 35469 / DSM 13698 / CCUG 18766 / IAM 14443 / JCM 21226 / LMG 7866 / NBRC 102419 / NCTC 12128 / CDC 0568-73)).